The chain runs to 373 residues: Chaperone protein DnaJ (373 aa).

The J domain occupies 5-70; it reads CYYEVLEVSR…EKRSRYDRFG (66 aa). The CR-type zinc-finger motif lies at 134-212; the sequence is GTEVELNIPV…CRGAGYVRKQ (79 aa). Residues Cys147, Cys150, Cys164, Cys167, Cys186, Cys189, Cys200, and Cys203 each contribute to the Zn(2+) site. CXXCXGXG motif repeat units lie at residues 147-154, 164-171, 186-193, and 200-207; these read CDTCEGSG, CSHCGGRG, CPACNGRG, and CSECRGAG.

Belongs to the DnaJ family. As to quaternary structure, homodimer. Requires Zn(2+) as cofactor.

The protein resides in the cytoplasm. Its function is as follows. Participates actively in the response to hyperosmotic and heat shock by preventing the aggregation of stress-denatured proteins and by disaggregating proteins, also in an autonomous, DnaK-independent fashion. Unfolded proteins bind initially to DnaJ; upon interaction with the DnaJ-bound protein, DnaK hydrolyzes its bound ATP, resulting in the formation of a stable complex. GrpE releases ADP from DnaK; ATP binding to DnaK triggers the release of the substrate protein, thus completing the reaction cycle. Several rounds of ATP-dependent interactions between DnaJ, DnaK and GrpE are required for fully efficient folding. Also involved, together with DnaK and GrpE, in the DNA replication of plasmids through activation of initiation proteins. The protein is Chaperone protein DnaJ of Maridesulfovibrio salexigens (strain ATCC 14822 / DSM 2638 / NCIMB 8403 / VKM B-1763) (Desulfovibrio salexigens).